A 146-amino-acid polypeptide reads, in one-letter code: Hemoglobin subunit beta (146 aa).

N-acetylvaline is present on V1. Residues H2–H146 enclose the Globin domain. Phosphothreonine is present on T12. Position 44 is a phosphoserine (S44). K59 is subject to N6-acetyllysine. Position 63 (H63) interacts with heme b. K82 carries the N6-acetyllysine modification. H92 lines the heme b pocket. C93 carries the S-nitrosocysteine modification. K144 carries the N6-acetyllysine modification.

The protein belongs to the globin family. Heterotetramer of two alpha chains and two beta chains. In terms of tissue distribution, red blood cells.

Functionally, involved in oxygen transport from the lung to the various peripheral tissues. This chain is Hemoglobin subunit beta (HBB), found in Cercocebus atys (Sooty mangabey).